A 457-amino-acid chain; its full sequence is UDP-N-acetylglucosamine 1-carboxyvinyltransferase (457 aa).

34–35 (KN) contributes to the phosphoenolpyruvate binding site. Position 104 (Arg-104) interacts with UDP-N-acetyl-alpha-D-glucosamine. The Proton donor role is filled by Cys-128. Cys-128 is subject to 2-(S-cysteinyl)pyruvic acid O-phosphothioketal. Residues Asp-319 and Ile-341 each contribute to the UDP-N-acetyl-alpha-D-glucosamine site. Positions 436–457 (INKSKNRSSNSKLKEVSEIRAA) are disordered. Residues 447–457 (KLKEVSEIRAA) are compositionally biased toward basic and acidic residues.

This sequence belongs to the EPSP synthase family. MurA subfamily.

It is found in the cytoplasm. It catalyses the reaction phosphoenolpyruvate + UDP-N-acetyl-alpha-D-glucosamine = UDP-N-acetyl-3-O-(1-carboxyvinyl)-alpha-D-glucosamine + phosphate. It functions in the pathway cell wall biogenesis; peptidoglycan biosynthesis. Its function is as follows. Cell wall formation. Adds enolpyruvyl to UDP-N-acetylglucosamine. This is UDP-N-acetylglucosamine 1-carboxyvinyltransferase from Prochlorococcus marinus subsp. pastoris (strain CCMP1986 / NIES-2087 / MED4).